A 699-amino-acid polypeptide reads, in one-letter code: MKIAVLFCFFLLIIFQTDFGKNEEIPRKQRRKIYHRRLRKSSTSHKHRSNRQLGIQQTTVFTPVARLPIVNFDYSMEEKFESFSSFPGVESSYNVLPGKKGHCLVKGITMYNKAVWSPEPCTTCLCSDGRVLCDETMCHPQRCPQTVIPEGECCPVCSATVSYSLLSGIALNDRNEFSGDSSEQREPTNLLHKQLPPPQVGMDRIVRKEALQSEEDEEVKEEDTEQKRETPESRNQGQLYSEGDSRGGDRKQRPGEERRLAHQQQRQGREEEEDEEEEGEEGEEDEEDEEDPVRGDMFRMPSRSPLPAPPRGTLRLPSGCSLSYRTISCINAMLTQIPPLTAPQITSLELTGNSIASIPDEAFNGLPNLERLDLSKNNITSSGIGPKAFKLLKKLMRLNMDGNNLIQIPSQLPSTLEELKVNENNLQAIDEESLSDLNQLVTLELEGNNLSEANVNPLAFKPLKSLAYLRLGKNKFRIIPQGLPGSIEELYLENNQIEEITEICFNHTRKINVIVLRYNKIEENRIAPLAWINQENLESIDLSYNKLYHVPSYLPKSLLHLVLLGNQIERIPGYVFGHMEPGLEYLYLSFNKLADDGMDRVSFYGAYHSLRELFLDHNDLKSIPPGIQEMKALHFLRLNNNKIRNILPEEICNAEEDDDSNLEHLHLENNYIKIREIPSYTFSCIRSYSSIVLKPQNIK.

An N-terminal signal peptide occupies residues methionine 1–glycine 20. The region spanning glycine 101–serine 158 is the VWFC domain. Over residues glutamate 176–glutamate 186 the composition is skewed to basic and acidic residues. Residues glutamate 176–leucine 316 are disordered. Over residues glutamine 212–threonine 224 the composition is skewed to acidic residues. A compositionally biased stretch (basic and acidic residues) spans glycine 243–leucine 260. The segment covering glutamate 270 to aspartate 291 has biased composition (acidic residues). Residues arginine 294–aspartate 296 carry the Cell attachment site motif. In terms of domain architecture, LRRNT spans proline 307–glutamine 344. LRR repeat units follow at residues asparagine 368–alanine 388, lysine 394–threonine 415, leucine 416–aspartate 436, glutamine 439–alanine 459, serine 465–proline 484, serine 486–histidine 507, lysine 510–alanine 530, asparagine 536–serine 557, leucine 558–histidine 578, glycine 582–serine 602, serine 609–methionine 630, alanine 632–asparagine 653, and asparagine 661–cysteine 684. N-linked (GlcNAc...) asparagine glycosylation is present at asparagine 378. Asparagine 449 carries N-linked (GlcNAc...) asparagine glycosylation. N-linked (GlcNAc...) asparagine glycosylation is present at asparagine 506.

The protein belongs to the small leucine-rich proteoglycan (SLRP) family. SLRP class I subfamily. Interacts with numerous extracellular matrix proteins. Interacts with MSL1 and RASSF1. In terms of tissue distribution, expressed predominantly in adipose tissue as well as female-specific organs such as mammary gland, ovary, and uterus.

The protein resides in the secreted. Its subcellular location is the extracellular space. It is found in the extracellular matrix. In terms of biological role, promotes matrix assembly and cell adhesiveness. In Homo sapiens (Human), this protein is Extracellular matrix protein 2 (ECM2).